We begin with the raw amino-acid sequence, 938 residues long: Probable glutamyl endopeptidase, chloroplastic (938 aa).

The N-terminal 54 residues, 1 to 54, are a transit peptide targeting the chloroplast; sequence MSSLTILLQRACLRFALLPVPPLRAPLRPPRRPLGLPRRSAMSSSAASRLSHIV. The span at 58–76 shows a compositional bias: low complexity; the sequence is GGAAGESSEPPAAAAAASG. The tract at residues 58–77 is disordered; that stretch reads GGAAGESSEPPAAAAAASGL. Catalysis depends on charge relay system residues Ser-762, Asp-836, and His-870. The span at 897 to 913 shows a compositional bias: polar residues; the sequence is SSKTDSDSVADTENKTV. Residues 897–938 are disordered; it reads SSKTDSDSVADTENKTVSASGGGAPCEGPEAEGFSSMQRSLL.

Belongs to the peptidase S9D family.

It is found in the plastid. It localises to the chloroplast stroma. Its function is as follows. Serine-type protease active in vitro against the LHCII N-terminal. Cleaves its substrate on the carboxy-side of Glu residues. The polypeptide is Probable glutamyl endopeptidase, chloroplastic (GEP) (Oryza sativa subsp. japonica (Rice)).